The following is a 249-amino-acid chain: Flavin-dependent thymidylate synthase (249 aa).

One can recognise a ThyX domain in the interval 7-235 (LDVQLIAATA…PVLFDDFHIT (229 aa)). DUMP is bound by residues 94–97 (ELVR), 105–109 (QLSQR), and Arg-174. Residues 97–99 (RHR) and Gln-105 each bind FAD. The short motif at 97 to 107 (RHRHFSFSQLS) is the ThyX motif element. FAD is bound by residues 190-192 (NYR) and His-196. Arg-201 contributes to the dUMP binding site. Arg-201 (involved in ionization of N3 of dUMP, leading to its activation) is an active-site residue.

Belongs to the thymidylate synthase ThyX family. Homotetramer. FAD serves as cofactor.

The catalysed reaction is dUMP + (6R)-5,10-methylene-5,6,7,8-tetrahydrofolate + NADPH + H(+) = dTMP + (6S)-5,6,7,8-tetrahydrofolate + NADP(+). The protein operates within pyrimidine metabolism; dTTP biosynthesis. Catalyzes the reductive methylation of 2'-deoxyuridine-5'-monophosphate (dUMP) to 2'-deoxythymidine-5'-monophosphate (dTMP) while utilizing 5,10-methylenetetrahydrofolate (mTHF) as the methyl donor, and NADPH and FADH(2) as the reductant. In Corynebacterium aurimucosum (strain ATCC 700975 / DSM 44827 / CIP 107346 / CN-1) (Corynebacterium nigricans), this protein is Flavin-dependent thymidylate synthase.